The primary structure comprises 378 residues: tRNA-specific 2-thiouridylase MnmA (378 aa).

ATP contacts are provided by residues 9-16 (GVSGGVDS) and methionine 35. Positions 94-96 (NPD) are interaction with target base in tRNA. Cysteine 99 serves as the catalytic Nucleophile. Cysteine 99 and cysteine 195 form a disulfide bridge. Glycine 123 lines the ATP pocket. The interaction with tRNA stretch occupies residues 145–147 (KDQ). The active-site Cysteine persulfide intermediate is cysteine 195. Positions 307 to 308 (RY) are interaction with tRNA.

Belongs to the MnmA/TRMU family.

It is found in the cytoplasm. The catalysed reaction is S-sulfanyl-L-cysteinyl-[protein] + uridine(34) in tRNA + AH2 + ATP = 2-thiouridine(34) in tRNA + L-cysteinyl-[protein] + A + AMP + diphosphate + H(+). Catalyzes the 2-thiolation of uridine at the wobble position (U34) of tRNA, leading to the formation of s(2)U34. In Xanthomonas euvesicatoria pv. vesicatoria (strain 85-10) (Xanthomonas campestris pv. vesicatoria), this protein is tRNA-specific 2-thiouridylase MnmA.